A 423-amino-acid polypeptide reads, in one-letter code: Histidine--tRNA ligase (423 aa).

This sequence belongs to the class-II aminoacyl-tRNA synthetase family. In terms of assembly, homodimer.

The protein resides in the cytoplasm. It carries out the reaction tRNA(His) + L-histidine + ATP = L-histidyl-tRNA(His) + AMP + diphosphate + H(+). In Rhodococcus jostii (strain RHA1), this protein is Histidine--tRNA ligase.